The sequence spans 137 residues: Small ribosomal subunit protein bS6 (137 aa).

A disordered region spans residues 104–137; the sequence is SLVNKANNKPEPKPTKAKKEDVAPEAKEQAQTEA. The span at 111–137 shows a compositional bias: basic and acidic residues; it reads NKPEPKPTKAKKEDVAPEAKEQAQTEA.

It belongs to the bacterial ribosomal protein bS6 family.

Functionally, binds together with bS18 to 16S ribosomal RNA. This Helicobacter hepaticus (strain ATCC 51449 / 3B1) protein is Small ribosomal subunit protein bS6.